The primary structure comprises 835 residues: MAASAAAASAAAASAASGSPGPGEGSAGGEKRSTAPSAAASASASAAASSPAGGGAEALELLEHCGVCRERLRPEREPRLLPCLHSACSACLGPAAPAAANSSGDGGAAGDGTVVDCPVCKQQCFSKDIVENYFMRDSGSKAATDAQDANQCCTSCEDNAPATSYCVECSEPLCETCVEAHQRVKYTKDHTVRSTGPAKSRDGERTVYCNVHKHEPLVLFCESCDTLTCRDCQLNAHKDHQYQFLEDAVRNQRKLLASLVKRLGDKHATLQKSTKEVRSSIRQVSDVQKRVQVDVKMAILQIMKELNKRGRVLVNDAQKVTEGQQERLERQHWTMTKIQKHQEHILRFASWALESDNNTALLLSKKLIYFQLHRALKMIVDPVEPHGEMKFQWDLNAWTKSAEAFGKIVAERPGTNSTGPAPMAPPRAPGPLSKQGSGSSQPMEVQEGYGFGSGDDPYSSAEPHVSGVKRSRSGEGEVSGLMRKVPRVSLERLDLDLTADSQPPVFKVFPGSTTEDYNLIVIERGAAAAATGQPGTAPAGTPGAPPLAGMAIVKEEETEAAIGAPPTATEGPETKPVLMALAEGPGAEGPRLASPSGSTSSGLEVVAPEGTSAPGGGPGTLDDSATICRVCQKPGDLVMCNQCEFCFHLDCHLPALQDVPGEEWSCSLCHVLPDLKEEDGSLSLDGADSTGVVAKLSPANQRKCERVLLALFCHEPCRPLHQLATDSTFSLDQPGGTLDLTLIRARLQEKLSPPYSSPQEFAQDVGRMFKQFNKLTEDKADVQSIIGLQRFFETRMNEAFGDTKFSAVLVEPPPMSLPGAGLSSQELSGGPGDGP.

Over residues 1 to 19 the composition is skewed to low complexity; that stretch reads MAASAAAASAAAASAASGS. Residues 1–49 form a disordered region; that stretch reads MAASAAAASAAAASAASGSPGPGEGSAGGEKRSTAPSAAASASASAAAS. Ala-2 carries the N-acetylalanine modification. Residues Ser-19 and Ser-26 each carry the phosphoserine modification. Residue Lys-31 forms a Glycyl lysine isopeptide (Lys-Gly) (interchain with G-Cter in SUMO2) linkage. Residues 35–49 are compositionally biased toward low complexity; the sequence is APSAAASASASAAAS. Position 50 is a phosphoserine (Ser-50). The RING-type zinc-finger motif lies at 65-121; that stretch reads CGVCRERLRPEREPRLLPCLHSACSACLGPAAPAAANSSGDGGAAGDGTVVDCPVCK. An RBCC domain region spans residues 65-376; that stretch reads CGVCRERLRP…LIYFQLHRAL (312 aa). A Glycyl lysine isopeptide (Lys-Gly) (interchain with G-Cter in SUMO2) cross-link involves residue Lys-127. Ser-138 carries the post-translational modification Phosphoserine. The B box-type 1; atypical zinc finger occupies 148 to 195; that stretch reads DANQCCTSCEDNAPATSYCVECSEPLCETCVEAHQRVKYTKDHTVRST. Zn(2+) contacts are provided by Cys-153, Cys-156, Cys-177, and His-181. Residue Lys-199 forms a Glycyl lysine isopeptide (Lys-Gly) (interchain with G-Cter in SUMO2) linkage. Residues 204 to 245 form a B box-type 2 zinc finger; the sequence is ERTVYCNVHKHEPLVLFCESCDTLTCRDCQLNAHKDHQYQFL. 4 residues coordinate Zn(2+): Cys-209, His-212, Cys-232, and His-237. The interval 246–376 is leucine zipper alpha helical coiled-coil region; that stretch reads EDAVRNQRKL…LIYFQLHRAL (131 aa). The tract at residues 247–376 is interaction with MAGEC2; that stretch reads DAVRNQRKLL…LIYFQLHRAL (130 aa). Residues Lys-254 and Lys-261 each participate in a glycyl lysine isopeptide (Lys-Gly) (interchain with G-Cter in SUMO2) cross-link. At Lys-266 the chain carries N6-acetyllysine. Lys-272 participates in a covalent cross-link: Glycyl lysine isopeptide (Lys-Gly) (interchain with G-Cter in SUMO2). Lys-304 carries the post-translational modification N6-acetyllysine; alternate. A Glycyl lysine isopeptide (Lys-Gly) (interchain with G-Cter in SUMO2); alternate cross-link involves residue Lys-304. Residue Lys-319 forms a Glycyl lysine isopeptide (Lys-Gly) (interchain with G-Cter in SUMO2) linkage. N6-acetyllysine is present on Lys-340. A Glycyl lysine isopeptide (Lys-Gly) (interchain with G-Cter in SUMO2) cross-link involves residue Lys-366. An involved in binding PPP1CA region spans residues 366–370; it reads KLIYF. Lys-377 bears the N6-acetyllysine; alternate mark. Lys-377 is covalently cross-linked (Glycyl lysine isopeptide (Lys-Gly) (interchain with G-Cter in SUMO2); alternate). A Glycyl lysine isopeptide (Lys-Gly) (interchain with G-Cter in SUMO1); alternate cross-link involves residue Lys-377. Lys-407 participates in a covalent cross-link: Glycyl lysine isopeptide (Lys-Gly) (interchain with G-Cter in SUMO2). Residues 411 to 480 are disordered; sequence ERPGTNSTGP…SRSGEGEVSG (70 aa). At Ser-417 the chain carries Phosphoserine. Lys-434 participates in a covalent cross-link: Glycyl lysine isopeptide (Lys-Gly) (interchain with G-Cter in SUMO2). A compositionally biased stretch (polar residues) spans 434–443; sequence KQGSGSSQPM. A phosphoserine mark is found at Ser-437, Ser-439, and Ser-453. Lys-469 participates in a covalent cross-link: Glycyl lysine isopeptide (Lys-Gly) (interchain with G-Cter in SUMO2); alternate. Residue Lys-469 forms a Glycyl lysine isopeptide (Lys-Gly) (interchain with G-Cter in SUMO1); alternate linkage. At Arg-470 the chain carries Citrulline. A Phosphoserine modification is found at Ser-471. The residue at position 472 (Arg-472) is a Citrulline. Residues Ser-473, Ser-479, and Ser-489 each carry the phosphoserine modification. Positions 476-513 are HP1 box; that stretch reads GEVSGLMRKVPRVSLERLDLDLTADSQPPVFKVFPGST. The PxVxL motif signature appears at 481 to 494; it reads LMRKVPRVSLERLD. Thr-498 bears the Phosphothreonine mark. Ser-501 is modified (phosphoserine). Residue Lys-507 forms a Glycyl lysine isopeptide (Lys-Gly) (interchain with G-Cter in SUMO2) linkage. Thr-541 is modified (phosphothreonine). A Glycyl lysine isopeptide (Lys-Gly) (interchain with G-Cter in SUMO2); alternate cross-link involves residue Lys-554. Lys-554 participates in a covalent cross-link: Glycyl lysine isopeptide (Lys-Gly) (interchain with G-Cter in SUMO); alternate. Residue Lys-575 forms a Glycyl lysine isopeptide (Lys-Gly) (interchain with G-Cter in SUMO2) linkage. A disordered region spans residues 584-618; sequence GPGAEGPRLASPSGSTSSGLEVVAPEGTSAPGGGP. Residue Ser-594 is modified to Phosphoserine. A PHD-type zinc finger spans residues 625–672; it reads ATICRVCQKPGDLVMCNQCEFCFHLDCHLPALQDVPGEEWSCSLCHVL. A Glycyl lysine isopeptide (Lys-Gly) (interchain with G-Cter in SUMO) cross-link involves residue Lys-676. Ser-683, Ser-689, and Ser-697 each carry phosphoserine. Residues 695–799 enclose the Bromo domain; it reads KLSPANQRKC…RFFETRMNEA (105 aa). Lys-750 is covalently cross-linked (Glycyl lysine isopeptide (Lys-Gly) (interchain with G-Cter in SUMO2); alternate). Lys-750 participates in a covalent cross-link: Glycyl lysine isopeptide (Lys-Gly) (interchain with G-Cter in SUMO1); alternate. Residue Lys-750 forms a Glycyl lysine isopeptide (Lys-Gly) (interchain with G-Cter in SUMO); alternate linkage. Position 752 is a phosphoserine (Ser-752). The residue at position 755 (Tyr-755) is a Phosphotyrosine. Ser-757 carries the post-translational modification Phosphoserine. An N6-acetyllysine; alternate mark is found at Lys-770, Lys-774, and Lys-779. Residues Lys-770, Lys-774, and Lys-779 each participate in a glycyl lysine isopeptide (Lys-Gly) (interchain with G-Cter in SUMO2); alternate cross-link. A Glycyl lysine isopeptide (Lys-Gly) (interchain with G-Cter in SUMO1); alternate cross-link involves residue Lys-779. Ser-784 carries the phosphoserine modification. Lys-804 participates in a covalent cross-link: Glycyl lysine isopeptide (Lys-Gly) (interchain with G-Cter in SUMO2); alternate. Lys-804 is covalently cross-linked (Glycyl lysine isopeptide (Lys-Gly) (interchain with G-Cter in SUMO); alternate). A disordered region spans residues 815-835; the sequence is MSLPGAGLSSQELSGGPGDGP. Phosphoserine; by ATM and ATR and dsDNA kinase is present on Ser-824.

It belongs to the TRIM/RBCC family. Interacts with SETX. Oligomer; the RBCC domain homotrimerizes and interacts with one molecule of KRAB to form the KRAB-KAP1 corepressor complex. Binding to a KRAB domain is an absolute requirement for silencing gene expression. Interacts with CEBPB and NR3C1. Interacts with a number of KRAB-ZFP proteins including ZNF10, ZFP53, ZFP68, ZNF382 and ZNF256. Interacts with NCOR1, NR3C1 and CHD3. Interacts with CEBPB (via the RING-type and PHD-type zinc fingers). Component of a ternary complex that includes TRIM28, a HP1 protein (CBX1, CBX3 OR CBX5), a KRAB domain-containing protein, and DNA. Interacts with CBX5 (via the PxVxL motif); the interaction occurs in interphase nuclei and competes for binding POGZ. Interacts with POGZ; the interaction competes for interaction with CBX5. Interacts with SETDB1; the interaction is enhanced by KAP1 sumoylation, stimulates SETDB1 histone methyltransferase activity and gene silencing. Interacts (via the PHD-type zinc finger) with UBE2I; the interaction is required for sumoylation and repressor activity. Component of the TRIM28/KAP1-ERBB4-MDM2 complex involved in connecting growth factor and DNA damage responses. Interacts directly with ERBB4; the interaction represses ERBB4-mediated transcription activity. Interacts with MDM2; the interaction contributes to p53/TP53 inactivation. Component of the TRIM28/KAP1-MDM2-p53/TP53; involved in regulating p53/TP53 stabilization and activity. Interacts (via the leucine zipper alpha helical coiled-coil) with E2F1 (central region); the interaction inhibits E2F1 acetylation and transcriptional activity. Interacts with PPP1CA; the interaction dephosphorylates TRIM28 at Ser-824 and forms a complex at the p21 promoter site. Interacts with PPP1CB; the interaction is weak but is increased on dephosphorylation at Ser-824. Interacts with FES/FPS. Interacts with SMARCAD1. Interacts with, and sumoylates IRF7. Interacts with MAGEC2. Part of a complex composed of TRIM28, HDAC1, HDAC2 and EHMT2. Interacts with AICDA. Interacts (via the RBCC domain) with KOX1 (via the KRAB domain), ZNF268 (via the KRAB domain) and ZNF300 (via the KRAB domain); the interactions increase KOX1, ZNF268 and ZNF300 nuclear localization activities. The large PER complex involved in the histone methylation is composed of at least PER2, CBX3, TRIM28, SUV39H1 and/or SUV39H2; CBX3 mediates the formation of the complex. Interacts with isoform 2 of ZFP90. Forms a complex with FOXP3 in the presence of isoform 2 of ZFP90. Interacts with NR4A3; the interactions potentiates NR4A3 activity on NurRE promoter. Interacts (unphosphorylated or phosphorylated form) with ZBTB1 (via BTB domain). Probably part of a corepressor complex containing ZNF304, TRIM28, SETDB1 and DNMT1. Interacts with ATRX. Forms a complex with ATRX, SETDB1 and ZNF274. Interacts with ZFP568; the interaction mediates ZFP568 transcriptional repression activity. Interacts with RRP1B. Interacts with CRY1. Interacts with ZNF263; recruited to the SIX3 promoter along with other proteins involved in chromatin modification and transcriptional corepression where it contributes to transcriptional repression. Interacts with CYREN (via XLF motif). Interacts with TRIM17; this interaction prevents TRIM28 activity. Interacts with ZNF746. Interacts with PHF13. Interacts with ZNF354C. Interacts with ZNF432; the interaction is independent of PARP1. As to quaternary structure, (Microbial infection) Interacts with herpes virus 8 protein LANA1; this interaction facilitates establishment of viral latency. Post-translationally, ATM-induced phosphorylation on Ser-824 represses sumoylation leading to the de-repression of expression of a subset of genes involved in cell cycle control and apoptosis in response to genotoxic stress. Dephosphorylation by the phosphatases, PPP1CA and PP1CB forms, allows sumoylation and expression of TRIM28 target genes. Sumoylation/desumoylation events regulate TRIM28-mediated transcriptional repression. Sumoylation is required for interaction with CHD3 and SETDB1 and the corepressor activity. Represses and is repressed by Ser-824 phosphorylation. Enhances the TRIM28 corepressor activity, inhibiting transcriptional activity of a number of genes including GADD45A and CDKN1A/p21. Lys-554, Lys-779 and Lys-804 are the major sites of sumoylation. In response to Dox-induced DNA damage, enhanced phosphorylation on Ser-824 prevents sumoylation and allows de-repression of CDKN1A/p21. In terms of processing, auto-ubiquitinated; enhanced by MAGEA2 and MAGEC2. Post-translationally, citrullinated by PADI4. ADP-ribosylated by SIRT6, promoting TRIM28/KAP1 interaction with CBX5, thereby contributing to the packaging of LINE-1 retrotransposon elements into transcriptionally repressive heterochromatin. Expressed in all tissues tested including spleen, thymus, prostate, testis, ovary, small intestine, colon and peripheral blood leukocytes.

It localises to the nucleus. The catalysed reaction is S-ubiquitinyl-[E2 ubiquitin-conjugating enzyme]-L-cysteine + [acceptor protein]-L-lysine = [E2 ubiquitin-conjugating enzyme]-L-cysteine + N(6)-ubiquitinyl-[acceptor protein]-L-lysine.. It participates in protein modification; protein sumoylation. In terms of biological role, nuclear corepressor for KRAB domain-containing zinc finger proteins (KRAB-ZFPs). Mediates gene silencing by recruiting CHD3, a subunit of the nucleosome remodeling and deacetylation (NuRD) complex, and SETDB1 (which specifically methylates histone H3 at 'Lys-9' (H3K9me)) to the promoter regions of KRAB target genes. Enhances transcriptional repression by coordinating the increase in H3K9me, the decrease in histone H3 'Lys-9 and 'Lys-14' acetylation (H3K9ac and H3K14ac, respectively) and the disposition of HP1 proteins to silence gene expression. Recruitment of SETDB1 induces heterochromatinization. May play a role as a coactivator for CEBPB and NR3C1 in the transcriptional activation of ORM1. Also a corepressor for ERBB4. Inhibits E2F1 activity by stimulating E2F1-HDAC1 complex formation and inhibiting E2F1 acetylation. May serve as a partial backup to prevent E2F1-mediated apoptosis in the absence of RB1. Important regulator of CDKN1A/p21(CIP1). Has E3 SUMO-protein ligase activity toward itself via its PHD-type zinc finger. Also specifically sumoylates IRF7, thereby inhibiting its transactivation activity. Ubiquitinates p53/TP53 leading to its proteasomal degradation; the function is enhanced by MAGEC2 and MAGEA2, and possibly MAGEA3 and MAGEA6. Mediates the nuclear localization of KOX1, ZNF268 and ZNF300 transcription factors. In association with isoform 2 of ZFP90, is required for the transcriptional repressor activity of FOXP3 and the suppressive function of regulatory T-cells (Treg). Probably forms a corepressor complex required for activated KRAS-mediated promoter hypermethylation and transcriptional silencing of tumor suppressor genes (TSGs) or other tumor-related genes in colorectal cancer (CRC) cells. Required to maintain a transcriptionally repressive state of genes in undifferentiated embryonic stem cells (ESCs). In ESCs, in collaboration with SETDB1, is also required for H3K9me3 and silencing of endogenous and introduced retroviruses in a DNA-methylation independent-pathway. Associates at promoter regions of tumor suppressor genes (TSGs) leading to their gene silencing. The SETDB1-TRIM28-ZNF274 complex may play a role in recruiting ATRX to the 3'-exons of zinc-finger coding genes with atypical chromatin signatures to establish or maintain/protect H3K9me3 at these transcriptionally active regions. (Microbial infection) Plays a critical role in the shutdown of lytic gene expression during the early stage of herpes virus 8 primary infection. This inhibition is mediated through interaction with herpes virus 8 protein LANA1. The chain is Transcription intermediary factor 1-beta from Homo sapiens (Human).